A 246-amino-acid polypeptide reads, in one-letter code: MKMTKSALVTGASRGIGRSIALQLAEEGYNVAVNYAGSKEKAEAVVEEIKAKGVDSFAIQANVADADEVKAMIKEVVSQFGSLDVLVNNAGITRDNLLMRMKEQEWDDVIDTNLKGVFNCIQKATPQMLRQRSGAIINLSSVVGAVGNPGQANYVATKAGVIGLTKSAARELASRGITVNAVAPGFIVSDMTDALSDELKEQMLTQIPLARFGQDTDIANTVAFLASDKAKYITGQTIHVNGGMYM.

NADP(+) is bound by residues 11–14 (GASR), 62–63 (NV), and Asn-89. Ser-141 contributes to the substrate binding site. Tyr-154 (proton acceptor) is an active-site residue. Residues 154–158 (YVATK) and Ile-187 each bind NADP(+).

This sequence belongs to the short-chain dehydrogenases/reductases (SDR) family. In terms of assembly, homotetramer.

It catalyses the reaction a (3R)-hydroxyacyl-[ACP] + NADP(+) = a 3-oxoacyl-[ACP] + NADPH + H(+). It functions in the pathway lipid metabolism; fatty acid biosynthesis. Its function is as follows. Catalyzes the NADPH-dependent reduction of beta-ketoacyl-ACP substrates to beta-hydroxyacyl-ACP products, the first reductive step in the elongation cycle of fatty acid biosynthesis. The sequence is that of 3-oxoacyl-[acyl-carrier-protein] reductase FabG (fabG) from Staphylococcus aureus (strain Mu50 / ATCC 700699).